A 255-amino-acid polypeptide reads, in one-letter code: Lipoprotein-releasing system ATP-binding protein LolD 2 (255 aa).

In terms of domain architecture, ABC transporter spans 9 to 254; the sequence is LEARGIRKSY…SDSAKLETVA (246 aa). 45–52 is a binding site for ATP; it reads GRSGSGKS.

This sequence belongs to the ABC transporter superfamily. Lipoprotein translocase (TC 3.A.1.125) family. As to quaternary structure, the complex is composed of two ATP-binding proteins (LolD) and two transmembrane proteins (LolC and LolE).

The protein localises to the cell inner membrane. In terms of biological role, part of the ABC transporter complex LolCDE involved in the translocation of mature outer membrane-directed lipoproteins, from the inner membrane to the periplasmic chaperone, LolA. Responsible for the formation of the LolA-lipoprotein complex in an ATP-dependent manner. This Rhodopirellula baltica (strain DSM 10527 / NCIMB 13988 / SH1) protein is Lipoprotein-releasing system ATP-binding protein LolD 2.